The chain runs to 68 residues: Small ribosomal subunit protein bS21 (68 aa).

This sequence belongs to the bacterial ribosomal protein bS21 family.

The polypeptide is Small ribosomal subunit protein bS21 (Dinoroseobacter shibae (strain DSM 16493 / NCIMB 14021 / DFL 12)).